Here is an 827-residue protein sequence, read N- to C-terminus: Valine--tRNA ligase (827 aa).

A 'HIGH' region motif is present at residues 41–51 (PNVTGQLHLGH). The 'KMSKS' region signature appears at 511 to 515 (KMTKS). Lysine 514 lines the ATP pocket. Positions 765 to 827 (ENLSKEKAQK…KELLDEKIIE (63 aa)) form a coiled coil.

It belongs to the class-I aminoacyl-tRNA synthetase family. ValS type 1 subfamily. In terms of assembly, monomer.

It is found in the cytoplasm. It carries out the reaction tRNA(Val) + L-valine + ATP = L-valyl-tRNA(Val) + AMP + diphosphate. Functionally, catalyzes the attachment of valine to tRNA(Val). As ValRS can inadvertently accommodate and process structurally similar amino acids such as threonine, to avoid such errors, it has a 'posttransfer' editing activity that hydrolyzes mischarged Thr-tRNA(Val) in a tRNA-dependent manner. The sequence is that of Valine--tRNA ligase from Mycoplasmopsis pulmonis (strain UAB CTIP) (Mycoplasma pulmonis).